A 327-amino-acid chain; its full sequence is Malate dehydrogenase 1 (327 aa).

12–18 lines the NAD(+) pocket; it reads GAAGQIA. The substrate site is built by R93 and R99. NAD(+) contacts are provided by residues N106, Q113, and 130–132; that span reads VGN. Substrate is bound by residues N132 and R163. The active-site Proton acceptor is H188.

This sequence belongs to the LDH/MDH superfamily. MDH type 2 family.

It catalyses the reaction (S)-malate + NAD(+) = oxaloacetate + NADH + H(+). Functionally, catalyzes the reversible oxidation of malate to oxaloacetate. This Burkholderia thailandensis (strain ATCC 700388 / DSM 13276 / CCUG 48851 / CIP 106301 / E264) protein is Malate dehydrogenase 1.